We begin with the raw amino-acid sequence, 1019 residues long: Alpha-mannosidase At3g26720 (1019 aa).

The signal sequence occupies residues 1–22 (MAVKCFSLYLILAAIVIGGVTS). 2 residues coordinate Zn(2+): His-47 and Asp-49. Residue Asn-64 is glycosylated (N-linked (GlcNAc...) asparagine). Asp-169 is a Zn(2+) binding site. Asn-278 and Asn-336 each carry an N-linked (GlcNAc...) asparagine glycan. His-410 is a binding site for Zn(2+). Cysteines 466 and 474 form a disulfide. Residues Asn-470, Asn-638, Asn-730, and Asn-820 are each glycosylated (N-linked (GlcNAc...) asparagine). Cysteines 824 and 829 form a disulfide.

This sequence belongs to the glycosyl hydrolase 38 family. As to quaternary structure, homodimer. Zn(2+) serves as cofactor.

It carries out the reaction Hydrolysis of terminal, non-reducing alpha-D-mannose residues in alpha-D-mannosides.. Its function is as follows. Liberates mannose from p-nitrophenyl-alpha-D-mannoside in vitro. The protein is Alpha-mannosidase At3g26720 of Arabidopsis thaliana (Mouse-ear cress).